A 402-amino-acid chain; its full sequence is S-adenosylmethionine synthase (402 aa).

An ATP-binding site is contributed by H16. Residue D18 participates in Mg(2+) binding. E44 contacts K(+). Residues E57 and Q103 each coordinate L-methionine. The segment at 103 to 113 (QSPDIAQGVDT) is flexible loop. Residues 178–180 (DGK), 249–250 (KF), D258, 264–265 (RK), A281, and K285 contribute to the ATP site. D258 is a binding site for L-methionine. K289 contacts L-methionine.

Belongs to the AdoMet synthase family. In terms of assembly, homotetramer; dimer of dimers. The cofactor is Mg(2+). Requires K(+) as cofactor.

The protein localises to the cytoplasm. It catalyses the reaction L-methionine + ATP + H2O = S-adenosyl-L-methionine + phosphate + diphosphate. Its pathway is amino-acid biosynthesis; S-adenosyl-L-methionine biosynthesis; S-adenosyl-L-methionine from L-methionine: step 1/1. Its function is as follows. Catalyzes the formation of S-adenosylmethionine (AdoMet) from methionine and ATP. The overall synthetic reaction is composed of two sequential steps, AdoMet formation and the subsequent tripolyphosphate hydrolysis which occurs prior to release of AdoMet from the enzyme. In Mycolicibacterium vanbaalenii (strain DSM 7251 / JCM 13017 / BCRC 16820 / KCTC 9966 / NRRL B-24157 / PYR-1) (Mycobacterium vanbaalenii), this protein is S-adenosylmethionine synthase.